The chain runs to 238 residues: 1-(5-phosphoribosyl)-5-[(5-phosphoribosylamino)methylideneamino] imidazole-4-carboxamide isomerase (238 aa).

The active-site Proton acceptor is Asp8. Asp129 functions as the Proton donor in the catalytic mechanism.

It belongs to the HisA/HisF family.

Its subcellular location is the cytoplasm. It carries out the reaction 1-(5-phospho-beta-D-ribosyl)-5-[(5-phospho-beta-D-ribosylamino)methylideneamino]imidazole-4-carboxamide = 5-[(5-phospho-1-deoxy-D-ribulos-1-ylimino)methylamino]-1-(5-phospho-beta-D-ribosyl)imidazole-4-carboxamide. Its pathway is amino-acid biosynthesis; L-histidine biosynthesis; L-histidine from 5-phospho-alpha-D-ribose 1-diphosphate: step 4/9. In Jannaschia sp. (strain CCS1), this protein is 1-(5-phosphoribosyl)-5-[(5-phosphoribosylamino)methylideneamino] imidazole-4-carboxamide isomerase.